We begin with the raw amino-acid sequence, 75 residues long: UPF0270 protein Pfl01_4103 (75 aa).

The protein belongs to the UPF0270 family.

The polypeptide is UPF0270 protein Pfl01_4103 (Pseudomonas fluorescens (strain Pf0-1)).